We begin with the raw amino-acid sequence, 419 residues long: Serine hydroxymethyltransferase (419 aa).

(6S)-5,6,7,8-tetrahydrofolate is bound by residues leucine 121 and 125–127 (GHL). Lysine 229 is subject to N6-(pyridoxal phosphate)lysine. 354-356 (SPF) lines the (6S)-5,6,7,8-tetrahydrofolate pocket.

It belongs to the SHMT family. As to quaternary structure, homodimer. Pyridoxal 5'-phosphate serves as cofactor.

It localises to the cytoplasm. The enzyme catalyses (6R)-5,10-methylene-5,6,7,8-tetrahydrofolate + glycine + H2O = (6S)-5,6,7,8-tetrahydrofolate + L-serine. It functions in the pathway one-carbon metabolism; tetrahydrofolate interconversion. It participates in amino-acid biosynthesis; glycine biosynthesis; glycine from L-serine: step 1/1. Catalyzes the reversible interconversion of serine and glycine with tetrahydrofolate (THF) serving as the one-carbon carrier. This reaction serves as the major source of one-carbon groups required for the biosynthesis of purines, thymidylate, methionine, and other important biomolecules. Also exhibits THF-independent aldolase activity toward beta-hydroxyamino acids, producing glycine and aldehydes, via a retro-aldol mechanism. The protein is Serine hydroxymethyltransferase of Coxiella burnetii (strain RSA 331 / Henzerling II).